The following is a 242-amino-acid chain: Biosynthetic peptidoglycan transglycosylase (242 aa).

Residues 19–39 form a helical membrane-spanning segment; it reads ILVVLAVFWGGGIALFSVVPV.

This sequence belongs to the glycosyltransferase 51 family.

It is found in the cell inner membrane. The catalysed reaction is [GlcNAc-(1-&gt;4)-Mur2Ac(oyl-L-Ala-gamma-D-Glu-L-Lys-D-Ala-D-Ala)](n)-di-trans,octa-cis-undecaprenyl diphosphate + beta-D-GlcNAc-(1-&gt;4)-Mur2Ac(oyl-L-Ala-gamma-D-Glu-L-Lys-D-Ala-D-Ala)-di-trans,octa-cis-undecaprenyl diphosphate = [GlcNAc-(1-&gt;4)-Mur2Ac(oyl-L-Ala-gamma-D-Glu-L-Lys-D-Ala-D-Ala)](n+1)-di-trans,octa-cis-undecaprenyl diphosphate + di-trans,octa-cis-undecaprenyl diphosphate + H(+). It participates in cell wall biogenesis; peptidoglycan biosynthesis. Functionally, peptidoglycan polymerase that catalyzes glycan chain elongation from lipid-linked precursors. This is Biosynthetic peptidoglycan transglycosylase from Citrobacter koseri (strain ATCC BAA-895 / CDC 4225-83 / SGSC4696).